The following is a 107-amino-acid chain: uncharacterized protein (107 aa).

The protein resides in the mitochondrion. This is an uncharacterized protein from Arabidopsis thaliana (Mouse-ear cress).